The chain runs to 117 residues: UPF0342 protein Bcer98_0695 (117 aa).

The protein belongs to the UPF0342 family.

The chain is UPF0342 protein Bcer98_0695 from Bacillus cytotoxicus (strain DSM 22905 / CIP 110041 / 391-98 / NVH 391-98).